Consider the following 124-residue polypeptide: Basic leucine zipper transcriptional factor ATF-like (124 aa).

Residues 1-23 show a composition bias toward polar residues; sequence MAQGSDNNDTSYTKSPSPGNKQG. The interval 1 to 60 is disordered; that stretch reads MAQGSDNNDTSYTKSPSPGNKQGSSDDMRKVMRREKNRIAAQKSRMRQTQKADSLHLESE. A bZIP domain is found at 27-90; sequence DMRKVMRREK…KYLSTVLSNH (64 aa). The interval 29–51 is basic motif; sequence RKVMRREKNRIAAQKSRMRQTQK. The interval 55–83 is leucine-zipper; the sequence is LHLESESLEKENAALRKEVKRLTEEAKYL.

Belongs to the bZIP family.

It localises to the nucleus. Its subcellular location is the cytoplasm. Functionally, AP-1 family transcription factor that controls the differentiation of lineage-specific cells in the immune system: specifically mediates the differentiation of T-helper 17 cells (Th17), follicular T-helper cells (TfH), CD8(+) dendritic cells and class-switch recombination (CSR) in B-cells. This chain is Basic leucine zipper transcriptional factor ATF-like (batf), found in Danio rerio (Zebrafish).